Here is a 262-residue protein sequence, read N- to C-terminus: Ribose-5-phosphate isomerase A (262 aa).

Residues 33–36 (TGST), 89–92 (DGAD), and 102–105 (KGGG) contribute to the substrate site. Catalysis depends on Glu-111, which acts as the Proton acceptor. A substrate-binding site is contributed by Lys-129.

The protein belongs to the ribose 5-phosphate isomerase family. As to quaternary structure, homodimer.

It catalyses the reaction aldehydo-D-ribose 5-phosphate = D-ribulose 5-phosphate. It participates in carbohydrate degradation; pentose phosphate pathway; D-ribose 5-phosphate from D-ribulose 5-phosphate (non-oxidative stage): step 1/1. Its function is as follows. Catalyzes the reversible conversion of ribose-5-phosphate to ribulose 5-phosphate. The protein is Ribose-5-phosphate isomerase A of Roseobacter denitrificans (strain ATCC 33942 / OCh 114) (Erythrobacter sp. (strain OCh 114)).